A 289-amino-acid chain; its full sequence is Eukaryotic translation initiation factor 3 subunit F (289 aa).

The MPN domain maps to 7–137; sequence VKVHPVVLFQ…LRAYVCVPLG (131 aa).

The protein belongs to the eIF-3 subunit F family. As to quaternary structure, component of the eukaryotic translation initiation factor 3 (eIF-3) complex.

The protein resides in the cytoplasm. In terms of biological role, component of the eukaryotic translation initiation factor 3 (eIF-3) complex, which is involved in protein synthesis of a specialized repertoire of mRNAs and, together with other initiation factors, stimulates binding of mRNA and methionyl-tRNAi to the 40S ribosome. The eIF-3 complex specifically targets and initiates translation of a subset of mRNAs involved in cell proliferation. This chain is Eukaryotic translation initiation factor 3 subunit F, found in Bombyx mori (Silk moth).